The sequence spans 153 residues: Pheromone-binding protein Gp-9 (153 aa).

The N-terminal stretch at M1–A19 is a signal peptide. 3 disulfides stabilise this stretch: C37/C77, C73/C129, and C118/C138.

It belongs to the PBP/GOBP family. Homodimer.

The protein resides in the secreted. In terms of biological role, colony queen number, a major feature of social organization, is associated with worker genotype for Gp-9. Colonies are headed by either a single reproductive queen (monogyne form) or multiple queens (polygyne form). Differences in worker Gp-9 genotypes between social forms may cause differences in workers' abilities to recognize queens and regulate their numbers. This is Pheromone-binding protein Gp-9 from Solenopsis daguerrei (Workerless parasitic ant).